The sequence spans 624 residues: RDLLLSQLCFLASVALLLWSLSSLREQKELDLMDLIGEDRKWMVGRKLMQVNDTLTSEDAGLRSSKNCTEPALHEFPRDIFSNEDRRQGAVVLHVLCAMYMFYALAIVCDDFFVPSLEKICERLHLSEDVAGATFMAAGSSAPELFTSVIGVFITKGDVGVGTIVGSAVFNILCIIGVCGLFAGQVVALSSWCLLRDSIYYTLSVVALIVFIYDEKVSWWESLVLVLMYLIYIIIMKYNACIHQCFERRTKGAGNMVNGLANNAEIDDSSNCDATVVLLKKANFHRKASVIMVDELLSAYPHQLSFSEAGLRIMITSHFPPKTRLSMASRMLINERQRLINSRAYTNGESEVAIKIPIKHTVENGTGPSSAPDRGVNGTRRDDIVAEADNETENENEDENNENDEEEDEDDDEGPYTPFDPPSGKLETVKWAFTWPLSFVLYFTVPNCNKPHWEKWFMVTFASSTLWIAAFSYMMVWMVTIIGYTLGIPDVIMGITFLAAGTSVPDCMASLIVARQGMGDMAVSNSIGSNVFDILIGLGLPWALQTLAVDYGSYIRLNSRGLIYSVGLLLASVFVTVFGVHLNKWQLDKKLGCGCLFLYGVFLCFSIMTEFNVFTFVNLPMCGD.

A signal peptide spans 1-25; that stretch reads RDLLLSQLCFLASVALLLWSLSSLR. The Extracellular segment spans residues 26–88; sequence EQKELDLMDL…DIFSNEDRRQ (63 aa). N-linked (GlcNAc...) asparagine glycans are attached at residues Asn-52 and Asn-67. A helical transmembrane segment spans residues 89 to 109; sequence GAVVLHVLCAMYMFYALAIVC. The Cytoplasmic portion of the chain corresponds to 110 to 133; that stretch reads DDFFVPSLEKICERLHLSEDVAGA. An Alpha-1 repeat occupies 130–170; that stretch reads VAGATFMAAGSSAPELFTSVIGVFITKGDVGVGTIVGSAVF. The helical transmembrane segment at 134–154 threads the bilayer; the sequence is TFMAAGSSAPELFTSVIGVFI. Over 155-163 the chain is Extracellular; the sequence is TKGDVGVGT. The chain crosses the membrane as a helical span at residues 164 to 184; sequence IVGSAVFNILCIIGVCGLFAG. At 185–191 the chain is on the cytoplasmic side; it reads QVVALSS. The helical transmembrane segment at 192 to 212 threads the bilayer; it reads WCLLRDSIYYTLSVVALIVFI. The Extracellular segment spans residues 213–215; it reads YDE. Residues 216-236 form a helical membrane-spanning segment; sequence KVSWWESLVLVLMYLIYIIIM. At 237-465 the chain is on the cytoplasmic side; the sequence is KYNACIHQCF…WFMVTFASST (229 aa). Ser-289 carries the phosphoserine modification. The segment covering 386 to 414 has biased composition (acidic residues); that stretch reads AEADNETENENEDENNENDEEEDEDDDEG. The interval 386-421 is disordered; sequence AEADNETENENEDENNENDEEEDEDDDEGPYTPFDP. The helical transmembrane segment at 466 to 486 threads the bilayer; that stretch reads LWIAAFSYMMVWMVTIIGYTL. Over 487 to 491 the chain is Extracellular; the sequence is GIPDV. Residues 492 to 512 traverse the membrane as a helical segment; sequence IMGITFLAAGTSVPDCMASLI. One copy of the Alpha-2 repeat lies at 499 to 530; that stretch reads AAGTSVPDCMASLIVARQGMGDMAVSNSIGSN. Residues 513–530 are Cytoplasmic-facing; that stretch reads VARQGMGDMAVSNSIGSN. Residues 531-551 form a helical membrane-spanning segment; the sequence is VFDILIGLGLPWALQTLAVDY. The Extracellular segment spans residues 552-561; sequence GSYIRLNSRG. The helical transmembrane segment at 562–582 threads the bilayer; that stretch reads LIYSVGLLLASVFVTVFGVHL. Residues 583–596 lie on the Cytoplasmic side of the membrane; it reads NKWQLDKKLGCGCL. A helical membrane pass occupies residues 597-617; it reads FLYGVFLCFSIMTEFNVFTFV. Topologically, residues 618–624 are extracellular; sequence NLPMCGD.

It belongs to the Ca(2+):cation antiporter (CaCA) (TC 2.A.19) family. SLC24A subfamily. Abundant in the brain. Expressed at low levels in the aorta, uterus and intestine.

The protein resides in the cell membrane. It carries out the reaction Ca(2+)(out) + K(+)(out) + 4 Na(+)(in) = Ca(2+)(in) + K(+)(in) + 4 Na(+)(out). In terms of biological role, calcium, potassium:sodium antiporter that transports 1 Ca(2+) and 1 K(+) in exchange for 4 Na(+). This Rattus norvegicus (Rat) protein is Sodium/potassium/calcium exchanger 3 (Slc24a3).